The chain runs to 1486 residues: Rap guanine nucleotide exchange factor 2 (1486 aa).

2 disordered regions span residues 40 to 59 and 68 to 101; these read HVSS…SSSL and SEAG…SDPL. Residues 83–94 show a composition bias toward acidic residues; the sequence is VDSEDDDDEEDI. 135–252 contributes to the a nucleoside 3',5'-cyclic phosphate binding site; sequence AFANMTMSVR…QKVEEEGEIV (118 aa). The region spanning 267–380 is the N-terminal Ras-GEF domain; the sequence is KGHIVIKGTS…RLLNIACAAK (114 aa). Residues 385–468 enclose the PDZ domain; it reads LMTLTKPARE…LSITVKTNLF (84 aa). Ser-501 is subject to Phosphoserine. A Ras-associating domain is found at 606–692; that stretch reads PDQVLRVFKA…GRYYLKNNME (87 aa). At Thr-644 the chain carries Phosphothreonine. Residues 717–944 enclose the Ras-GEF domain; sequence STVEVATQLS…SQGSTNATVL (228 aa). Phosphoserine occurs at positions 806, 930, 933, and 1022. The tract at residues 1002–1049 is disordered; it reads PATNTLPKNPTDKKPVKSETSPVAPRAGLQPKAQPQPQPPQPPHKLNQ. Residues 1035–1044 show a composition bias toward pro residues; sequence QPQPQPPQPP. A phosphoserine mark is found at Ser-1077, Ser-1086, Ser-1092, Ser-1113, Ser-1117, Ser-1156, and Ser-1173. 4 disordered regions span residues 1090 to 1176, 1221 to 1254, 1303 to 1357, and 1391 to 1486; these read EGSL…SVSI, PSTE…SGSH, KYSR…DSSS, and GRYR…VSAV. 2 stretches are compositionally biased toward low complexity: residues 1105–1122 and 1138–1159; these read SNTS…QSSP and SDSG…SFDS. Composition is skewed to polar residues over residues 1244 to 1254 and 1304 to 1328; these read GSWTSCSSGSH and YSRQ…SSTG. The span at 1475–1486 shows a compositional bias: acidic residues; that stretch reads AEEDEDEQVSAV.

The protein belongs to the RAPGEF2 family. Found in a complex, at least composed of KIDINS220, MAGI2, NTRK1 and RAPGEF2; the complex is mainly formed at late endosomes in a neuronal growth factor (NGF)-dependent manner. Interacts (via C-terminal domain) with NEDD4 (via WW domains); this interaction leads to ubiquitination and degradation via the proteasome pathway in a cAMP-independent manner. Interacts with MAGI1 (via PDZ domain). Interacts with ADRB1 (via C-terminal PDZ motif); the interaction is direct. Interacts (via Ras-associating domain) with RAP1A (via GTP-bound active form). Interacts weakly with HRAS (via GDP- and GTP-bound forms). Interacts (via C-terminal domain) with MAGI2 (via PDZ and WW domains). Interacts with CDH1 and TJP1. Interacts with CTNNB1. Ubiquitinated by NEDD4, leading to proteasomal degradation. Post-translationally, phosphorylation by PLK2 promotes its activity.

Its subcellular location is the cytoplasm. The protein localises to the perinuclear region. It is found in the cell membrane. It localises to the late endosome. The protein resides in the cell junction. Functions as a guanine nucleotide exchange factor (GEF), which activates Rap and Ras family of small GTPases by exchanging bound GDP for free GTP in a cAMP-dependent manner. Serves as a link between cell surface receptors and Rap/Ras GTPases in intracellular signaling cascades. Also acts as an effector for Rap1 by direct association with Rap1-GTP thereby leading to the amplification of Rap1-mediated signaling. Shows weak activity on HRAS. It is controversial whether RAPGEF2 binds cAMP and cGMP or not. Its binding to ligand-activated beta-1 adrenergic receptor ADRB1 leads to the Ras activation through the G(s)-alpha signaling pathway. Involved in the cAMP-induced Ras and Erk1/2 signaling pathway that leads to sustained inhibition of long term melanogenesis by reducing dendrite extension and melanin synthesis. Also provides inhibitory signals for cell proliferation of melanoma cells and promotes their apoptosis in a cAMP-independent nanner. Regulates cAMP-induced neuritogenesis by mediating the Rap1/B-Raf/ERK signaling through a pathway that is independent on both PKA and RAPGEF3/RAPGEF4. Involved in neuron migration and in the formation of the major forebrain fiber connections forming the corpus callosum, the anterior commissure and the hippocampal commissure during brain development. Involved in neuronal growth factor (NGF)-induced sustained activation of Rap1 at late endosomes and in brain-derived neurotrophic factor (BDNF)-induced axon outgrowth of hippocampal neurons. Plays a role in the regulation of embryonic blood vessel formation and in the establishment of basal junction integrity and endothelial barrier function. May be involved in the regulation of the vascular endothelial growth factor receptor KDR and cadherin CDH5 expression at allantois endothelial cell-cell junctions. Binds to cAMP. This is Rap guanine nucleotide exchange factor 2 (RAPGEF2) from Bos taurus (Bovine).